The chain runs to 185 residues: Peptidyl-tRNA hydrolase (185 aa).

TRNA is bound at residue Tyr-14. The active-site Proton acceptor is the His-19. Residues Phe-64, Asn-66, and Asn-112 each contribute to the tRNA site.

This sequence belongs to the PTH family. As to quaternary structure, monomer.

Its subcellular location is the cytoplasm. The catalysed reaction is an N-acyl-L-alpha-aminoacyl-tRNA + H2O = an N-acyl-L-amino acid + a tRNA + H(+). In terms of biological role, hydrolyzes ribosome-free peptidyl-tRNAs (with 1 or more amino acids incorporated), which drop off the ribosome during protein synthesis, or as a result of ribosome stalling. Functionally, catalyzes the release of premature peptidyl moieties from peptidyl-tRNA molecules trapped in stalled 50S ribosomal subunits, and thus maintains levels of free tRNAs and 50S ribosomes. The polypeptide is Peptidyl-tRNA hydrolase (Alkaliphilus oremlandii (strain OhILAs) (Clostridium oremlandii (strain OhILAs))).